The chain runs to 232 residues: 5'-methylthioadenosine/S-adenosylhomocysteine nucleosidase (232 aa).

The active-site Proton acceptor is Glu12. Residues Gly78, Ile152, and 173–174 (ME) each bind substrate. Catalysis depends on Asp197, which acts as the Proton donor.

It belongs to the PNP/UDP phosphorylase family. MtnN subfamily. As to quaternary structure, homodimer.

The enzyme catalyses S-adenosyl-L-homocysteine + H2O = S-(5-deoxy-D-ribos-5-yl)-L-homocysteine + adenine. It carries out the reaction S-methyl-5'-thioadenosine + H2O = 5-(methylsulfanyl)-D-ribose + adenine. It catalyses the reaction 5'-deoxyadenosine + H2O = 5-deoxy-D-ribose + adenine. It participates in amino-acid biosynthesis; L-methionine biosynthesis via salvage pathway; S-methyl-5-thio-alpha-D-ribose 1-phosphate from S-methyl-5'-thioadenosine (hydrolase route): step 1/2. In terms of biological role, catalyzes the irreversible cleavage of the glycosidic bond in both 5'-methylthioadenosine (MTA) and S-adenosylhomocysteine (SAH/AdoHcy) to adenine and the corresponding thioribose, 5'-methylthioribose and S-ribosylhomocysteine, respectively. Also cleaves 5'-deoxyadenosine, a toxic by-product of radical S-adenosylmethionine (SAM) enzymes, into 5-deoxyribose and adenine. Thus, is required for in vivo function of the radical SAM enzymes biotin synthase and lipoic acid synthase, that are inhibited by 5'-deoxyadenosine accumulation. The chain is 5'-methylthioadenosine/S-adenosylhomocysteine nucleosidase from Escherichia fergusonii (strain ATCC 35469 / DSM 13698 / CCUG 18766 / IAM 14443 / JCM 21226 / LMG 7866 / NBRC 102419 / NCTC 12128 / CDC 0568-73).